The primary structure comprises 193 residues: Molybdopterin synthase catalytic subunit (193 aa).

Residues 118–119, lysine 134, and 141–143 each bind substrate; these read HR and KKE. Residues 159-193 are disordered; the sequence is DRTTTDGTTASSPAPATRPAKGGGCCGSKVRANES. Positions 163–178 are enriched in low complexity; sequence TDGTTASSPAPATRPA.

This sequence belongs to the MoaE family. MOCS2B subfamily. Heterotetramer; composed of 2 small (MOCS2A) and 2 large (MOCS2B) subunits.

It is found in the cytoplasm. The enzyme catalyses 2 [molybdopterin-synthase sulfur-carrier protein]-C-terminal-Gly-aminoethanethioate + cyclic pyranopterin phosphate + H2O = molybdopterin + 2 [molybdopterin-synthase sulfur-carrier protein]-C-terminal Gly-Gly + 2 H(+). Its pathway is cofactor biosynthesis; molybdopterin biosynthesis. Its function is as follows. Catalytic subunit of the molybdopterin synthase complex, a complex that catalyzes the conversion of precursor Z into molybdopterin. Acts by mediating the incorporation of 2 sulfur atoms from thiocarboxylated MOCS2A into precursor Z to generate a dithiolene group. The polypeptide is Molybdopterin synthase catalytic subunit (Oryza sativa subsp. indica (Rice)).